The sequence spans 81 residues: Acyl carrier protein (81 aa).

In terms of domain architecture, Carrier spans 1–79 (MDREEILQKI…EAVDYVVEHQ (79 aa)). Serine 39 is subject to O-(pantetheine 4'-phosphoryl)serine.

The protein belongs to the acyl carrier protein (ACP) family. Post-translationally, 4'-phosphopantetheine is transferred from CoA to a specific serine of apo-ACP by AcpS. This modification is essential for activity because fatty acids are bound in thioester linkage to the sulfhydryl of the prosthetic group.

The protein localises to the cytoplasm. It functions in the pathway lipid metabolism; fatty acid biosynthesis. Carrier of the growing fatty acid chain in fatty acid biosynthesis. The protein is Acyl carrier protein of Rubrobacter xylanophilus (strain DSM 9941 / JCM 11954 / NBRC 16129 / PRD-1).